Reading from the N-terminus, the 149-residue chain is Large ribosomal subunit protein bL9 (149 aa).

This sequence belongs to the bacterial ribosomal protein bL9 family.

Binds to the 23S rRNA. The chain is Large ribosomal subunit protein bL9 from Bacillus licheniformis (strain ATCC 14580 / DSM 13 / JCM 2505 / CCUG 7422 / NBRC 12200 / NCIMB 9375 / NCTC 10341 / NRRL NRS-1264 / Gibson 46).